The primary structure comprises 63 residues: Large ribosomal subunit protein bL28 (63 aa).

Belongs to the bacterial ribosomal protein bL28 family.

This chain is Large ribosomal subunit protein bL28, found in Desulfatibacillum aliphaticivorans.